The following is a 484-amino-acid chain: tRNA sulfurtransferase (484 aa).

Residues 63-167 enclose the THUMP domain; the sequence is REMIERLTCT…LDRLFVIHRQ (105 aa). ATP is bound by residues 185-186, Lys-267, Gly-289, and Gln-298; that span reads LM. Residues Cys-346 and Cys-457 are joined by a disulfide bond. In terms of domain architecture, Rhodanese spans 405 to 483; sequence VLPGQIVIDI…GHTNVRVYRP (79 aa). Cys-457 functions as the Cysteine persulfide intermediate in the catalytic mechanism.

It belongs to the ThiI family.

It localises to the cytoplasm. It catalyses the reaction [ThiI sulfur-carrier protein]-S-sulfanyl-L-cysteine + a uridine in tRNA + 2 reduced [2Fe-2S]-[ferredoxin] + ATP + H(+) = [ThiI sulfur-carrier protein]-L-cysteine + a 4-thiouridine in tRNA + 2 oxidized [2Fe-2S]-[ferredoxin] + AMP + diphosphate. The enzyme catalyses [ThiS sulfur-carrier protein]-C-terminal Gly-Gly-AMP + S-sulfanyl-L-cysteinyl-[cysteine desulfurase] + AH2 = [ThiS sulfur-carrier protein]-C-terminal-Gly-aminoethanethioate + L-cysteinyl-[cysteine desulfurase] + A + AMP + 2 H(+). It participates in cofactor biosynthesis; thiamine diphosphate biosynthesis. Catalyzes the ATP-dependent transfer of a sulfur to tRNA to produce 4-thiouridine in position 8 of tRNAs, which functions as a near-UV photosensor. Also catalyzes the transfer of sulfur to the sulfur carrier protein ThiS, forming ThiS-thiocarboxylate. This is a step in the synthesis of thiazole, in the thiamine biosynthesis pathway. The sulfur is donated as persulfide by IscS. This chain is tRNA sulfurtransferase, found in Pseudomonas paraeruginosa (strain DSM 24068 / PA7) (Pseudomonas aeruginosa (strain PA7)).